Reading from the N-terminus, the 148-residue chain is Macrodomain Ter protein (148 aa).

This sequence belongs to the MatP family. As to quaternary structure, homodimer.

The protein localises to the cytoplasm. Required for spatial organization of the terminus region of the chromosome (Ter macrodomain) during the cell cycle. Prevents early segregation of duplicated Ter macrodomains during cell division. Binds specifically to matS, which is a 13 bp signature motif repeated within the Ter macrodomain. This Aliivibrio salmonicida (strain LFI1238) (Vibrio salmonicida (strain LFI1238)) protein is Macrodomain Ter protein.